Reading from the N-terminus, the 396-residue chain is Chalcone synthase (396 aa).

Residue cysteine 169 is part of the active site.

The protein belongs to the thiolase-like superfamily. Chalcone/stilbene synthases family.

It catalyses the reaction (E)-4-coumaroyl-CoA + 3 malonyl-CoA + 3 H(+) = 2',4,4',6'-tetrahydroxychalcone + 3 CO2 + 4 CoA. It participates in secondary metabolite biosynthesis; flavonoid biosynthesis. In terms of biological role, the primary product of this enzyme is 4,2',4',6'-tetrahydroxychalcone (also termed naringenin-chalcone or chalcone) which can under specific conditions spontaneously isomerize into naringenin. In Pinus sylvestris (Scotch pine), this protein is Chalcone synthase (CHS).